The chain runs to 75 residues: Kappa-thalatoxin-Tas2a (75 aa).

Residues 1 to 22 (MKFQMIAAVLLIAFCLSVVVTA) form the signal peptide. The propeptide occupies 23–40 (RMELQDDEEMKNGSFQKR). The region spanning 43-75 (CIDTIPKSRCTAFQCKHSMKYRLSFCRKTCGTC) is the ShKT domain. 3 disulfide bridges follow: Cys43–Cys75, Cys52–Cys68, and Cys57–Cys72.

Belongs to the sea anemone type 1 potassium channel toxin family. Type 1a subfamily.

It is found in the secreted. The protein resides in the nematocyst. Inhibits voltage-gated potassium channels (Kv) with higher potency for Kv1.1/KCNA1 and Kv1.3/KCNA3 (IC(50)=3.4 nM). The sequence is that of Kappa-thalatoxin-Tas2a from Thalassianthus aster (Fuzzy-tipped anemone).